The sequence spans 189 residues: Elongation factor P (189 aa).

An N6-(3,6-diaminohexanoyl)-5-hydroxylysine modification is found at Lys-34.

It belongs to the elongation factor P family. May be beta-lysylated on the epsilon-amino group of Lys-34 by the combined action of EpmA and EpmB, and then hydroxylated on the C5 position of the same residue by EpmC (if this protein is present). Lysylation is critical for the stimulatory effect of EF-P on peptide-bond formation. The lysylation moiety may extend toward the peptidyltransferase center and stabilize the terminal 3-CCA end of the tRNA. Hydroxylation of the C5 position on Lys-34 may allow additional potential stabilizing hydrogen-bond interactions with the P-tRNA.

The protein resides in the cytoplasm. It participates in protein biosynthesis; polypeptide chain elongation. Its function is as follows. Involved in peptide bond synthesis. Alleviates ribosome stalling that occurs when 3 or more consecutive Pro residues or the sequence PPG is present in a protein, possibly by augmenting the peptidyl transferase activity of the ribosome. Modification of Lys-34 is required for alleviation. The sequence is that of Elongation factor P from Alkalilimnicola ehrlichii (strain ATCC BAA-1101 / DSM 17681 / MLHE-1).